A 340-amino-acid chain; its full sequence is Selenide, water dikinase (340 aa).

C13 is an active-site residue. ATP-binding positions include K16 and A43–D45. Mg(2+) is bound at residue D46. ATP contacts are provided by residues D63, D86, and G133–S135. D86 lines the Mg(2+) pocket. D221 lines the Mg(2+) pocket.

The protein belongs to the selenophosphate synthase 1 family. Class I subfamily. In terms of assembly, homodimer. It depends on Mg(2+) as a cofactor.

The catalysed reaction is hydrogenselenide + ATP + H2O = selenophosphate + AMP + phosphate + 2 H(+). In terms of biological role, synthesizes selenophosphate from selenide and ATP. This Desulfitobacterium hafniense (strain DSM 10664 / DCB-2) protein is Selenide, water dikinase.